We begin with the raw amino-acid sequence, 702 residues long: MADS-box MEF2 type transcription factor MIG1 (702 aa).

The region spanning 1 to 61 (MGRRKIEIKA…KKLYEYSSGD (61 aa)) is the MADS-box domain. Disordered stretches follow at residues 73-608 (GGAT…NIDT) and 658-702 (PSFL…KVDS). Positions 86 to 96 (GGDDDDEEEGD) are enriched in acidic residues. Residues 132-144 (ASPPIPNGVPFPP) show a composition bias toward pro residues. Low complexity predominate over residues 145–155 (HGHGVPRGHTP). Positions 180–195 (GSPQVNGFGFGQQQSM) are enriched in polar residues. Residues 201-241 (TTMPPHMPPQMAPGPPFPYPQHPQHPPHPPHPPHPPHPQQP) are compositionally biased toward pro residues. Composition is skewed to low complexity over residues 273–284 (PMGMQRHSVSPP), 326–343 (ESPQ…QQPE), and 350–371 (EQQQ…QSEP). Positions 456 to 465 (VDESTSNASE) are enriched in polar residues. 2 stretches are compositionally biased toward low complexity: residues 487-512 (RASI…SLRA) and 530-553 (DGSG…DATS). Over residues 554-567 (QSTRQNDSHSSTNM) the composition is skewed to polar residues. Over residues 587 to 600 (PPNPFAPKRPPQHP) the composition is skewed to pro residues. Basic and acidic residues predominate over residues 693–702 (NEPKRVKVDS).

This sequence belongs to the MEF2 family. As to quaternary structure, interacts with MAPK MPS1.

It localises to the nucleus. Its function is as follows. Transcription factor acting downstream of the MPS1 MAP kinase (MAPK) cascade during conidiation and plant infection. Required for overcoming plant defense responses and the differentiation of secondary infectious hyphae in live plant cells. This Pyricularia oryzae (strain 70-15 / ATCC MYA-4617 / FGSC 8958) (Rice blast fungus) protein is MADS-box MEF2 type transcription factor MIG1.